The chain runs to 315 residues: Hydroxysteroid 11-beta-dehydrogenase 1-like protein (315 aa).

A signal peptide spans 1 to 15 (MKVLLLTGLGALFFA). NADP(+)-binding positions include 36–62 (GANA…TAHT), 87–88 (DM), and 114–116 (NHI). Ser165 is a substrate binding site. The active-site Proton acceptor is the Tyr178. NADP(+) contacts are provided by residues 178 to 182 (YSAAK) and 211 to 217 (GLRDRAS). Residues 221 to 286 (AVRSSTSRPR…SKTEKNDGHL (66 aa)) are disordered. The span at 277–286 (SKTEKNDGHL) shows a compositional bias: basic and acidic residues.

Belongs to the short-chain dehydrogenases/reductases (SDR) family. As to expression, highly expressed in the brain.

It localises to the secreted. It carries out the reaction cortisone + NADPH + H(+) = cortisol + NADP(+). Functionally, unidirectional NADP(+)-dependent cortisol dehydrogenase (in vitro). This Homo sapiens (Human) protein is Hydroxysteroid 11-beta-dehydrogenase 1-like protein (HSD11B1L).